Here is a 788-residue protein sequence, read N- to C-terminus: Protein translocase subunit SecA 2 (788 aa).

ATP is bound by residues Q86, 104–108 (GEGKT), and D493.

It belongs to the SecA family. In terms of assembly, monomer and homodimer. Part of the essential Sec protein translocation apparatus which comprises SecA, SecYEG and auxiliary proteins SecDF. Other proteins may also be involved.

It is found in the cell membrane. It localises to the cytoplasm. The enzyme catalyses ATP + H2O + cellular proteinSide 1 = ADP + phosphate + cellular proteinSide 2.. In terms of biological role, part of the Sec protein translocase complex. Interacts with the SecYEG preprotein conducting channel. Has a central role in coupling the hydrolysis of ATP to the transfer of proteins into and across the cell membrane, serving as an ATP-driven molecular motor driving the stepwise translocation of polypeptide chains across the membrane. The protein is Protein translocase subunit SecA 2 of Bacillus cereus (strain ZK / E33L).